The sequence spans 405 residues: MAFKTLDDLLAEGVSGRHVLVRSDFNVPLDDEGNITDSGRITASLPTIKALIEGGAKVILSAHLGRPKGEVNPKYSLAPVAEALSEALDQYVALAGDVSGEDAHERANGLNDGDVLLLENVRFDPRETSKDEAERGTFADELVALAADNGAFVSDGFGVVHRAQASVYDVAKRLPAYAGKLVQKEVETLAAVAEKPEHPYVVVLGGAKVSDKLGVIEALAGKADKVIIGGGMCYTLLAAQGYNVQDSLLQEDQIDNCKELLERFGDKIVLPVDLVAATEFDAQAENKVVALDGIPEGWQSLDIGPESVKKFDEVIASSKTVFWNGPMGVFEMEAFSKGTAGVAQSIIDATAKNGSFTVVGGGDSAASVRLLGLDEEGFSHISTGGGASLEFLEGKELPGVKVLEA.

Substrate-binding positions include 24-26 (DFN), R40, 63-66 (HLGR), R122, and R162. Residues K212, E331, and 361-364 (GGDS) contribute to the ATP site.

The protein belongs to the phosphoglycerate kinase family. Monomer.

The protein resides in the cytoplasm. It carries out the reaction (2R)-3-phosphoglycerate + ATP = (2R)-3-phospho-glyceroyl phosphate + ADP. Its pathway is carbohydrate degradation; glycolysis; pyruvate from D-glyceraldehyde 3-phosphate: step 2/5. The polypeptide is Phosphoglycerate kinase (Corynebacterium aurimucosum (strain ATCC 700975 / DSM 44827 / CIP 107346 / CN-1) (Corynebacterium nigricans)).